Here is a 168-residue protein sequence, read N- to C-terminus: Prespore-specific protein A (168 aa).

A signal peptide spans 1-19 (MKFQHTFIALLSLLTYANA). 13 O-linked (GlcNAc) threonine glycosylation sites follow: Thr-110, Thr-114, Thr-116, Thr-118, Thr-120, Thr-122, Thr-124, Thr-126, Thr-128, Thr-130, Thr-132, Thr-134, and Thr-138. A run of 3 repeats spans residues 116–119 (TPTV), 120–123 (TPTV), and 124–127 (TPTV). The interval 116 to 127 (TPTVTPTVTPTV) is 3 X 4 AA tandem repeats of T-P-T-V. A compositionally biased stretch (low complexity) spans 116–131 (TPTVTPTVTPTVTPTP). The disordered stretch occupies residues 116–147 (TPTVTPTVTPTVTPTPTNTPNPTPSQTSTTTG). Ser-140 carries O-linked (GlcNAc) serine glycosylation. Gly-147 carries GPI-like-anchor amidated glycine lipidation. The propeptide at 148–168 (SASTVVASLSLIIFSMILSLC) is removed in mature form.

This sequence belongs to the ponticulin family. Post-translationally, O-glycosylated in the repeat region. The oligosaccharides contain N-acetylglucosamine and fucose as the major constituents. In terms of processing, the GPI-like-anchor contains a phosphoceramide group, rather than a phosphatidyl group.

The protein localises to the cell membrane. Its function is as follows. May bind F-actin and nucleates actin assembly. This chain is Prespore-specific protein A (pspA), found in Dictyostelium discoideum (Social amoeba).